The chain runs to 166 residues: Large ribosomal subunit protein uL10 (166 aa).

Belongs to the universal ribosomal protein uL10 family. As to quaternary structure, part of the ribosomal stalk of the 50S ribosomal subunit. The N-terminus interacts with L11 and the large rRNA to form the base of the stalk. The C-terminus forms an elongated spine to which L12 dimers bind in a sequential fashion forming a multimeric L10(L12)X complex.

Its function is as follows. Forms part of the ribosomal stalk, playing a central role in the interaction of the ribosome with GTP-bound translation factors. This is Large ribosomal subunit protein uL10 from Bacillus licheniformis (strain ATCC 14580 / DSM 13 / JCM 2505 / CCUG 7422 / NBRC 12200 / NCIMB 9375 / NCTC 10341 / NRRL NRS-1264 / Gibson 46).